The sequence spans 480 residues: NADH-quinone oxidoreductase subunit N 1 (480 aa).

The next 14 membrane-spanning stretches (helical) occupy residues 12–32, 38–58, 78–98, 106–126, 128–148, 163–183, 203–223, 241–261, 271–291, 303–323, 326–346, 372–392, 396–416, and 449–469; these read LSMP…IGVF, TPTV…WLVL, FMKV…VGHA, FEFP…ISAN, LISL…VAAI, FVLG…VYGF, LGLV…ISAV, TAFF…RIVI, WQQI…FAAI, SSIG…MAGV, VILY…CILA, ATVL…AGFF, FVFV…GVLA, and LVFG…GPLG.

Belongs to the complex I subunit 2 family. As to quaternary structure, NDH-1 is composed of 14 different subunits. Subunits NuoA, H, J, K, L, M, N constitute the membrane sector of the complex.

The protein resides in the cell inner membrane. The enzyme catalyses a quinone + NADH + 5 H(+)(in) = a quinol + NAD(+) + 4 H(+)(out). NDH-1 shuttles electrons from NADH, via FMN and iron-sulfur (Fe-S) centers, to quinones in the respiratory chain. The immediate electron acceptor for the enzyme in this species is believed to be ubiquinone. Couples the redox reaction to proton translocation (for every two electrons transferred, four hydrogen ions are translocated across the cytoplasmic membrane), and thus conserves the redox energy in a proton gradient. This chain is NADH-quinone oxidoreductase subunit N 1, found in Rhizobium meliloti (strain 1021) (Ensifer meliloti).